The sequence spans 216 residues: Somatotropin (216 aa).

Residues 1-26 (MAAGPRTSMLLAFALLCLPWTQEVGA) form the signal peptide. Residue His45 participates in Zn(2+) binding. Cys78 and Cys189 are joined by a disulfide. Ser131 bears the Phosphoserine mark. A Zn(2+)-binding site is contributed by Glu198. Cys206 and Cys214 are oxidised to a cystine.

The protein belongs to the somatotropin/prolactin family.

It is found in the secreted. Functionally, plays an important role in growth control. Its major role in stimulating body growth is to stimulate the liver and other tissues to secrete IGF1. It stimulates both the differentiation and proliferation of myoblasts. It also stimulates amino acid uptake and protein synthesis in muscle and other tissues. This Balaenoptera physalus (Fin whale) protein is Somatotropin (GH1).